Here is a 105-residue protein sequence, read N- to C-terminus: Large ribosomal subunit protein uL24 (105 aa).

This sequence belongs to the universal ribosomal protein uL24 family. Part of the 50S ribosomal subunit.

Its function is as follows. One of two assembly initiator proteins, it binds directly to the 5'-end of the 23S rRNA, where it nucleates assembly of the 50S subunit. Functionally, one of the proteins that surrounds the polypeptide exit tunnel on the outside of the subunit. The sequence is that of Large ribosomal subunit protein uL24 from Mycobacterium tuberculosis (strain CDC 1551 / Oshkosh).